The sequence spans 65 residues: Large ribosomal subunit protein uL29 (65 aa).

The protein belongs to the universal ribosomal protein uL29 family.

The chain is Large ribosomal subunit protein uL29 from Leptothrix cholodnii (strain ATCC 51168 / LMG 8142 / SP-6) (Leptothrix discophora (strain SP-6)).